The chain runs to 1226 residues: MAGSNIKVQIEKQLSERILLIDGGMGTMIQGYKFEEEDYRGERFNKWHCDLKGNNDLLVLSQPQIIRDIHEAYLEAGADILETNTFNATTIAMADYDMESLSEEINFEAAKLAREVADKWTEKTPNKPRYVAGVLGPTNRTCSISPDVNDPGFRNVSFDELVEAYSESTRALIRGGSDLILIETIFDTLNAKACSFAVESVFEELDITLPVMISGTITDASGRTLSGQTTEAFYNALRHVKPISFGLNCALGPDELREYVSDLSRISECYVSAHPNAGLPNAFGEYDLSPEDMAEHVAEWASSGFLNLIGGCCGTTPEHIRQMALVVEGVKPRQLPELPVACRLSGLEPLTIEKDSLFINVGERTNVTGSARFKRLIKEELYDEALSVAQEQVENGAQIIDINMDEGMLDAEACMVRFLNLCASEPEISKVPVMVDSSKWEVIEAGLKCIQGKGIVNSISLKEGKEKFVHQAKLIRRYGAAVIVMAFDEVGQADTRERKIEICTNAYNILVDEVGFPPEDIIFDPNIFAVATGIDEHNNYAVDFIEAVGDIKRTLPHAMISGGVSNVSFSFRGNNYVREAIHAVFLYHCFKNGMDMGIVNAGQLEIYDNVPEDLREAVEDVVLNRRDDSTERLLDIATEYLERAVGKVEDKSALEWRDWPVEKRLEHSLVKGITEFIVEDTEEARINAEKPIEVIEGPLMDGMNVVGDLFGEGKMFLPQVVKSARVMKQAVAHLEPFINASKEVGATNGKILLATVKGDVHDIGKNIVGVVLQCNNYEIIDLGVMVSCETILKVAKEENVDIIGLSGLITPSLDEMVHVAKEMERQGFDLPLLIGGATTSKAHTAVKIEQNYSQPVVYVNNASRAVGVCTSLLSDELKPSFVEKLDIDYERVREQHSRKQPRTKPVTLEVARANKVAIDWASYTPPVPLKPGVHIFDNFDVSTLRNYIDWTPFFMTWSLVGKYPKILDHEEVGEEAKRLFKDANDLLDRVEKEGLLKARGMCALFPASSVGDDIEVYTDESRTKVAKVLHNLRQQTEKPKGFNYCLSDYIAPKESGKNDWIGGFAVTGGIGERELADEYKANGDDYNAIMIQAVADRLAEAFAEYLHEKVRKEIWGYSPNETLSNDDLIREKYQGIRPAPGYPACPEHTEKGALWELMNVEESIGMSLTSSYAMWPGASVSGMYFSHPDSRYFAIAQIQQDQAESYADRKGWNMLEAEKWLGPNLN.

The 321-residue stretch at 7-327 folds into the Hcy-binding domain; that stretch reads KVQIEKQLSE…EHIRQMALVV (321 aa). The Zn(2+) site is built by C249, C312, and C313. One can recognise a Pterin-binding domain in the interval 358-619; the sequence is FINVGERTNV…VPEDLREAVE (262 aa). Positions 652-746 constitute a B12-binding N-terminal domain; sequence SALEWRDWPV…FINASKEVGA (95 aa). Methylcob(III)alamin-binding positions include E696, 758-762, H761, S806, T810, and A862; that span reads GDVHD. Positions 748–883 constitute a B12-binding domain; the sequence is NGKILLATVK…SDELKPSFVE (136 aa). The AdoMet activation domain occupies 899–1226; sequence KQPRTKPVTL…AEKWLGPNLN (328 aa). Residues D949, R1137, and 1192 to 1193 contribute to the S-adenosyl-L-methionine site; that span reads YF.

Belongs to the vitamin-B12 dependent methionine synthase family. The cofactor is methylcob(III)alamin. Zn(2+) is required as a cofactor.

The catalysed reaction is (6S)-5-methyl-5,6,7,8-tetrahydrofolate + L-homocysteine = (6S)-5,6,7,8-tetrahydrofolate + L-methionine. Its pathway is amino-acid biosynthesis; L-methionine biosynthesis via de novo pathway; L-methionine from L-homocysteine (MetH route): step 1/1. Its function is as follows. Catalyzes the transfer of a methyl group from methyl-cobalamin to homocysteine, yielding enzyme-bound cob(I)alamin and methionine. Subsequently, remethylates the cofactor using methyltetrahydrofolate. The chain is Methionine synthase (metH) from Aliivibrio fischeri (strain ATCC 700601 / ES114) (Vibrio fischeri).